The following is a 117-amino-acid chain: Large ribosomal subunit protein bL20 (117 aa).

It belongs to the bacterial ribosomal protein bL20 family.

In terms of biological role, binds directly to 23S ribosomal RNA and is necessary for the in vitro assembly process of the 50S ribosomal subunit. It is not involved in the protein synthesizing functions of that subunit. This Gloeothece citriformis (strain PCC 7424) (Cyanothece sp. (strain PCC 7424)) protein is Large ribosomal subunit protein bL20.